The chain runs to 443 residues: dTDP-4-dehydro-6-deoxy-alpha-D-glucopyranose 2,3-dehydratase (443 aa).

DTDP-4-dehydro-6-deoxy-alpha-D-glucose-binding positions include Trp-35, 118–122 (TFSNY), Ser-157, Trp-260, Arg-325, 341–343 (QCN), 346–347 (NL), and 377–380 (EGGR).

It belongs to the hexose 2,3-dehydratase family. Homodimer.

It catalyses the reaction dTDP-4-dehydro-6-deoxy-alpha-D-glucose = dTDP-3,4-didehydro-2,6-dideoxy-alpha-D-glucose + H2O. The protein operates within antibiotic biosynthesis; granaticin biosynthesis. Its function is as follows. Involved in the biosynthesis of the 2,6-deoxysugar, dTDP-L-rhodinose, attached to the benzoisochromane quinone chromophore to produce the aglycone antibiotics granaticin and granaticin B. Catalyzes the removal of the hydroxyl group at position C-2 of the hexose ring of dTDP-4-dehydro-6-deoxy-alpha-D-glucopyranose, and the oxidation of the hydroxyl group at position C-3 to form a carbonyl functionality. The product of the reaction, dTDP-2,6-dideoxy-D-glycero-hex-2-enos-4-ulose, is a highly unstable diketosugar, which spontaneously forms dTDP-3,4-didehydro-2,6-dideoxy-alpha-D-glucose. The chain is dTDP-4-dehydro-6-deoxy-alpha-D-glucopyranose 2,3-dehydratase from Streptomyces violaceoruber.